Reading from the N-terminus, the 275-residue chain is Calcium-binding protein 4 (275 aa).

Over residues 1-12 (MTTEQARGQQGP) the composition is skewed to polar residues. Residues 1-112 (MTTEQARGQQ…SLHDAAQRTY (112 aa)) are disordered. Residues 38–55 (TRKRSKKERGLRGSRKRT) are compositionally biased toward basic residues. S42 bears the Phosphoserine mark. 4 EF-hand domains span residues 129 to 164 (EELD…LGYM), 183 to 200 (GRVD…KLRE), 206 to 241 (LGVR…LLGE), and 243 to 275 (LAGP…LSRH). Ca(2+) is bound by residues D142, D144, D146, Y148, and E153. Residues D219, D221, D223, R225, E230, D256, N258, D260, T262, and E267 each coordinate Ca(2+).

In terms of assembly, interacts with CACNA1F and CACNA1D (via IQ domain) in a calcium independent manner. Interacts (via N-terminus) with UNC119. In terms of processing, phosphorylated. Phosphorylation levels change with the light conditions and regulate the activity. In terms of tissue distribution, expressed in retina and in the inner hair cells (IHC) of the cochlea.

The protein localises to the cytoplasm. Its subcellular location is the presynapse. Involved in normal synaptic function through regulation of Ca(2+) influx and neurotransmitter release in photoreceptor synaptic terminals and in auditory transmission. Modulator of CACNA1D and CACNA1F, suppressing the calcium-dependent inactivation and shifting the activation range to more hyperpolarized voltages. The polypeptide is Calcium-binding protein 4 (CABP4) (Homo sapiens (Human)).